The sequence spans 121 residues: Ribonuclease P protein component (121 aa).

It belongs to the RnpA family. Consists of a catalytic RNA component (M1 or rnpB) and a protein subunit.

The enzyme catalyses Endonucleolytic cleavage of RNA, removing 5'-extranucleotides from tRNA precursor.. Functionally, RNaseP catalyzes the removal of the 5'-leader sequence from pre-tRNA to produce the mature 5'-terminus. It can also cleave other RNA substrates such as 4.5S RNA. The protein component plays an auxiliary but essential role in vivo by binding to the 5'-leader sequence and broadening the substrate specificity of the ribozyme. The protein is Ribonuclease P protein component of Oceanobacillus iheyensis (strain DSM 14371 / CIP 107618 / JCM 11309 / KCTC 3954 / HTE831).